The chain runs to 492 residues: NADH-quinone oxidoreductase subunit N (492 aa).

The next 14 helical transmembrane spans lie at 13–33 (MLPVLLVLVGAIVSTLGGFWL), 43–63 (ILFVLASGASLVWLWGGAPWA), 82–102 (AALLLGGTVLLGALLTLLVSL), 110–132 (VSFAEFDALLMYAVTGCLLIAFS), 136–155 (IVMLIGLEIMSLASYVLATL), 169–189 (FLLGSVGSAILIYGLAFLYGA), 210–230 (IGILVTGTLLVLSGFGVKIAL), 245–265 (PTLVSLFLSTVVKVAAFAGML), 272–292 (LAAGPGWHSVLQILVALTLVI), 306–326 (LLAYSAVAHTGFLAMTLLGDT), 331–351 (AALGYYLLVYTLMTVGALAVV), 377–397 (AVALAFCLASLAGLPPFAGFF), 410–430 (GYLLISVLAVLSSVAALVYYL), and 457–477 (VAVALSLIGIVVLGLLPNLWY).

This sequence belongs to the complex I subunit 2 family. In terms of assembly, NDH-1 is composed of 15 different subunits. Subunits NuoA, H, J, K, L, M, N constitute the membrane sector of the complex.

Its subcellular location is the cell membrane. It carries out the reaction a quinone + NADH + 5 H(+)(in) = a quinol + NAD(+) + 4 H(+)(out). In terms of biological role, NDH-1 shuttles electrons from NADH, via FMN and iron-sulfur (Fe-S) centers, to quinones in the respiratory chain. The immediate electron acceptor for the enzyme in this species is believed to be a menaquinone. Couples the redox reaction to proton translocation (for every two electrons transferred, four hydrogen ions are translocated across the cytoplasmic membrane), and thus conserves the redox energy in a proton gradient. The chain is NADH-quinone oxidoreductase subunit N from Deinococcus radiodurans (strain ATCC 13939 / DSM 20539 / JCM 16871 / CCUG 27074 / LMG 4051 / NBRC 15346 / NCIMB 9279 / VKM B-1422 / R1).